Consider the following 593-residue polypeptide: NADH-quinone oxidoreductase subunit C/D (593 aa).

The NADH dehydrogenase I subunit C stretch occupies residues 1 to 184 (MTADNALYIP…DPYSLTLAKQ (184 aa)). The interval 208–593 (DYMFLNLGPN…IDFVMADVDR (386 aa)) is NADH dehydrogenase I subunit D.

This sequence in the N-terminal section; belongs to the complex I 30 kDa subunit family. In the C-terminal section; belongs to the complex I 49 kDa subunit family. NDH-1 is composed of 13 different subunits. Subunits NuoB, CD, E, F, and G constitute the peripheral sector of the complex.

The protein resides in the cell inner membrane. It carries out the reaction a quinone + NADH + 5 H(+)(in) = a quinol + NAD(+) + 4 H(+)(out). NDH-1 shuttles electrons from NADH, via FMN and iron-sulfur (Fe-S) centers, to quinones in the respiratory chain. The immediate electron acceptor for the enzyme in this species is believed to be ubiquinone. Couples the redox reaction to proton translocation (for every two electrons transferred, four hydrogen ions are translocated across the cytoplasmic membrane), and thus conserves the redox energy in a proton gradient. The chain is NADH-quinone oxidoreductase subunit C/D from Pseudomonas savastanoi pv. phaseolicola (strain 1448A / Race 6) (Pseudomonas syringae pv. phaseolicola (strain 1448A / Race 6)).